Here is a 286-residue protein sequence, read N- to C-terminus: ATP synthase gamma chain (286 aa).

The protein belongs to the ATPase gamma chain family. F-type ATPases have 2 components, CF(1) - the catalytic core - and CF(0) - the membrane proton channel. CF(1) has five subunits: alpha(3), beta(3), gamma(1), delta(1), epsilon(1). CF(0) has three main subunits: a, b and c.

The protein localises to the cell inner membrane. Produces ATP from ADP in the presence of a proton gradient across the membrane. The gamma chain is believed to be important in regulating ATPase activity and the flow of protons through the CF(0) complex. The sequence is that of ATP synthase gamma chain from Pseudomonas fluorescens (strain Pf0-1).